The primary structure comprises 535 residues: Light-independent protochlorophyllide reductase subunit B (535 aa).

Asp-36 contributes to the [4Fe-4S] cluster binding site. Catalysis depends on Asp-292, which acts as the Proton donor. 428 to 429 contacts substrate; sequence GL. The interval 447–483 is disordered; that stretch reads SDDAAKAEPDQPVSNAHGHTESKTVSQGEPIASDEGG.

This sequence belongs to the ChlB/BchB/BchZ family. Protochlorophyllide reductase is composed of three subunits; BchL, BchN and BchB. Forms a heterotetramer of two BchB and two BchN subunits. [4Fe-4S] cluster serves as cofactor.

The catalysed reaction is chlorophyllide a + oxidized 2[4Fe-4S]-[ferredoxin] + 2 ADP + 2 phosphate = protochlorophyllide a + reduced 2[4Fe-4S]-[ferredoxin] + 2 ATP + 2 H2O. Its pathway is porphyrin-containing compound metabolism; bacteriochlorophyll biosynthesis (light-independent). Its function is as follows. Component of the dark-operative protochlorophyllide reductase (DPOR) that uses Mg-ATP and reduced ferredoxin to reduce ring D of protochlorophyllide (Pchlide) to form chlorophyllide a (Chlide). This reaction is light-independent. The NB-protein (BchN-BchB) is the catalytic component of the complex. The polypeptide is Light-independent protochlorophyllide reductase subunit B (Chlorobium phaeobacteroides (strain DSM 266 / SMG 266 / 2430)).